We begin with the raw amino-acid sequence, 103 residues long: N(4)-acetylcytidine amidohydrolase (103 aa).

The 96-residue stretch at 6–101 (ITFFQRFQDD…QTQFYVIEFK (96 aa)) folds into the ASCH domain. Lysine 21 functions as the Proton acceptor in the catalytic mechanism. Residue threonine 24 is the Nucleophile of the active site. Catalysis depends on glutamate 74, which acts as the Proton donor.

Belongs to the N(4)-acetylcytidine amidohydrolase family.

The catalysed reaction is N(4)-acetylcytidine + H2O = cytidine + acetate + H(+). It carries out the reaction N(4)-acetyl-2'-deoxycytidine + H2O = 2'-deoxycytidine + acetate + H(+). The enzyme catalyses N(4)-acetylcytosine + H2O = cytosine + acetate + H(+). Catalyzes the hydrolysis of N(4)-acetylcytidine (ac4C). In Escherichia coli O127:H6 (strain E2348/69 / EPEC), this protein is N(4)-acetylcytidine amidohydrolase (yqfB).